Here is a 180-residue protein sequence, read N- to C-terminus: Immediate early response gene 2 protein (180 aa).

The segment at 53–135 (MSEKSGQSVT…KRRSKTATDS (83 aa)) is disordered. Polar residues predominate over residues 56-92 (KSGQSVTEECTSHTQEPMDTSSSTATPLRETSGQSSE). Over residues 93–103 (DGQRSGLEGHP) the composition is skewed to basic and acidic residues.

Belongs to the IER family. In terms of assembly, interacts with FIBPB.

The protein resides in the nucleus. It is found in the cytoplasm. Its function is as follows. DNA-binding protein that seems to act as a transcription factor. Mediates with FIBPB FGF-signaling in Kupffer's vesicle ciliogenesis and in the establishment of laterality in the embryo. The chain is Immediate early response gene 2 protein from Danio rerio (Zebrafish).